The chain runs to 977 residues: Monofunctional C1-tetrahydrofolate synthase, mitochondrial (977 aa).

Residues 1–31 constitute a mitochondrion transit peptide; sequence MSVRLPLLLRQLGRQQLPSGPACRLRELCRS. The interval 29 to 71 is disordered; sequence CRSGSRSSSSGGGDPEGLRGRRLQDGQTFSSHGPGNPEAPGMD. Residues 32-347 are methylenetetrahydrofolate dehydrogenase and cyclohydrolase; that stretch reads GSRSSSSGGG…REQQHRRWRL (316 aa). Position 188 is an N6-acetyllysine; alternate (K188). K188 bears the N6-succinyllysine; alternate mark. Residues 348 to 977 form a formyltetrahydrofolate synthetase region; that stretch reads HCLKLQPLSP…TETEQVKGLF (630 aa). Phosphoserine is present on S356. 422 to 429 lines the ATP pocket; it reads TPLGEGKS. Position 595 is an N6-succinyllysine (K595).

It in the N-terminal section; belongs to the tetrahydrofolate dehydrogenase/cyclohydrolase family. The protein in the C-terminal section; belongs to the formate--tetrahydrofolate ligase family. In terms of assembly, homodimer.

Its subcellular location is the mitochondrion. The enzyme catalyses (6S)-5,6,7,8-tetrahydrofolate + formate + ATP = (6R)-10-formyltetrahydrofolate + ADP + phosphate. The protein operates within one-carbon metabolism; tetrahydrofolate interconversion. Its function is as follows. May provide the missing metabolic reaction required to link the mitochondria and the cytoplasm in the mammalian model of one-carbon folate metabolism complementing thus the enzymatic activities of MTHFD2. This Mus musculus (Mouse) protein is Monofunctional C1-tetrahydrofolate synthase, mitochondrial (Mthfd1l).